The primary structure comprises 550 residues: Major fimbrium tip subunit FimE (550 aa).

The signal sequence occupies residues 1–21; that stretch reads MKSKSIIAQLLYVLIAFMAVS. Residue Cys22 is the site of N-palmitoyl cysteine attachment. Cys22 carries the S-diacylglycerol cysteine lipid modification. Positions 22 to 51 are excised as a propeptide; the sequence is CVADKSEPCPSGEPTRVSGSIVSLEHHGLR.

This sequence belongs to the FimE family. Fimbriae are composed of a major, structural subunit and the minor components FimC, FimD and FimE. Identified in a complex composed of FimC, FimD and FimE (in vitro). Does not directly interact with host proteins, but only as a complex with FimC and FimD.

Its subcellular location is the fimbrium. It localises to the cell outer membrane. Probably a component of the fimbrium tip; required for incorporation of FimC and FimD into fimbriae. These long, filamentous pili are attached to the cell surface; they mediate biofilm formation, adhesion onto host cells and onto other bacteria that are part of the oral microbiome. They play an important role in invasion of periodontal tissues and are major virulence factors. FimC, FimD and FimE contribute to interaction with host CXCR4 and thereby down-regulate the TLR2-mediated host immune response. The protein is Major fimbrium tip subunit FimE of Porphyromonas gingivalis (strain ATCC 33277 / DSM 20709 / CIP 103683 / JCM 12257 / NCTC 11834 / 2561).